Here is a 238-residue protein sequence, read N- to C-terminus: Small ribosomal subunit protein uS3 (238 aa).

One can recognise a KH type-2 domain in the interval 39–107 (MREFIHDYAK…ELHLNIVEIR (69 aa)). Positions 212–222 (PQAHDRRHSEA) are enriched in basic and acidic residues. The tract at residues 212 to 238 (PQAHDRRHSEAQEGAAPRPPRRDRERA) is disordered.

The protein belongs to the universal ribosomal protein uS3 family. Part of the 30S ribosomal subunit. Forms a tight complex with proteins S10 and S14.

In terms of biological role, binds the lower part of the 30S subunit head. Binds mRNA in the 70S ribosome, positioning it for translation. This Cereibacter sphaeroides (strain ATCC 17025 / ATH 2.4.3) (Rhodobacter sphaeroides) protein is Small ribosomal subunit protein uS3.